The primary structure comprises 120 residues: Large ribosomal subunit protein uL18 (120 aa).

It belongs to the universal ribosomal protein uL18 family. As to quaternary structure, part of the 50S ribosomal subunit; part of the 5S rRNA/L5/L18/L25 subcomplex. Contacts the 5S and 23S rRNAs.

Its function is as follows. This is one of the proteins that bind and probably mediate the attachment of the 5S RNA into the large ribosomal subunit, where it forms part of the central protuberance. This chain is Large ribosomal subunit protein uL18, found in Staphylococcus carnosus (strain TM300).